A 433-amino-acid polypeptide reads, in one-letter code: ATP-dependent protease ATPase subunit HslU (433 aa).

Residues V18, 60–65, D246, E311, and R383 each bind ATP; that span reads GVGKTE.

It belongs to the ClpX chaperone family. HslU subfamily. In terms of assembly, a double ring-shaped homohexamer of HslV is capped on each side by a ring-shaped HslU homohexamer. The assembly of the HslU/HslV complex is dependent on binding of ATP.

It localises to the cytoplasm. In terms of biological role, ATPase subunit of a proteasome-like degradation complex; this subunit has chaperone activity. The binding of ATP and its subsequent hydrolysis by HslU are essential for unfolding of protein substrates subsequently hydrolyzed by HslV. HslU recognizes the N-terminal part of its protein substrates and unfolds these before they are guided to HslV for hydrolysis. The sequence is that of ATP-dependent protease ATPase subunit HslU from Rhodopseudomonas palustris (strain HaA2).